Consider the following 372-residue polypeptide: AA9 family lytic polysaccharide monooxygenase C (372 aa).

An N-terminal signal peptide occupies residues 1–16; sequence MFRSALFLLLAPLALS. Positions 17 and 99 each coordinate Cu(2+). The cysteines at positions 59 and 189 are disulfide-linked. O2-binding residues include H174 and Q184. A Cu(2+)-binding site is contributed by Y186.

The protein belongs to the polysaccharide monooxygenase AA9 family. The cofactor is Cu(2+).

The protein resides in the secreted. The catalysed reaction is [(1-&gt;4)-beta-D-glucosyl]n+m + reduced acceptor + O2 = 4-dehydro-beta-D-glucosyl-[(1-&gt;4)-beta-D-glucosyl]n-1 + [(1-&gt;4)-beta-D-glucosyl]m + acceptor + H2O.. Functionally, lytic polysaccharide monooxygenase (LPMO) that depolymerizes crystalline and amorphous polysaccharides via the oxidation of scissile alpha- or beta-(1-4)-glycosidic bonds, yielding C1 or C4 oxidation products. Catalysis by LPMOs requires the reduction of the active-site copper from Cu(II) to Cu(I) by a reducing agent and H(2)O(2) or O(2) as a cosubstrate. The chain is AA9 family lytic polysaccharide monooxygenase C from Aspergillus tamarii.